The following is a 410-amino-acid chain: Neurotensin receptor type 2 (410 aa).

The Extracellular segment spans residues 1–32 (METSSPRPPRPSSNPGLSLDARLGVDTRLWAK). A helical membrane pass occupies residues 33 to 55 (VLFTALYALIWALGAAGNALSAH). Topologically, residues 56–64 (VVLKARAGR) are cytoplasmic. Residues 65–87 (AGRLRHHVLSLALAGLLLLLVGV) form a helical membrane-spanning segment. At 88 to 109 (PVELYSFVWFHYPWVFGDLGCR) the chain is on the extracellular side. Cys-108 and Cys-194 form a disulfide bridge. A helical membrane pass occupies residues 110–131 (GYYFVHELCAYATVLSVAGLSA). Residues 132–154 (ERCLAVCQPLRARSLLTPRRTRW) are Cytoplasmic-facing. Residues 155–176 (LVALSWAASLGLALPMAVIMGQ) form a helical membrane-spanning segment. At 177–217 (KHELETADGEPEPASRVCTVLVSRTALQVFIQVNVLVSFVL) the chain is on the extracellular side. Residues 218 to 237 (PLALTAFLNGVTVSHLLALC) form a helical membrane-spanning segment. The Cytoplasmic segment spans residues 238-297 (SQVPSTSTPGSSTPSRLELLSEEGLLSFIVWKKTFIQGGQVSLVRHKDVRRIRSLQRSVQ). Residues 298–318 (VLRAIVVMYVICWLPYHARRL) traverse the membrane as a helical segment. The Extracellular portion of the chain corresponds to 319–337 (MYCYVPDDAWTDPLYNFYH). The helical transmembrane segment at 338–358 (YFYMVTNTLFYVSSAVTPLLY) threads the bilayer. Residues 359–410 (NAVSSSFRKLFLEAVSSLCGEHHPMKRLPPKPQSPTLMDTASGFGDPPETRT) lie on the Cytoplasmic side of the membrane. Cys-377 carries S-palmitoyl cysteine lipidation. A disordered region spans residues 381–410 (HPMKRLPPKPQSPTLMDTASGFGDPPETRT).

It belongs to the G-protein coupled receptor 1 family. Neurotensin receptor subfamily. NTSR2 sub-subfamily. In terms of tissue distribution, expressed in prostate (at protein level).

The protein resides in the cell membrane. Functionally, receptor for the tridecapeptide neurotensin. It is associated with G proteins that activate a phosphatidylinositol-calcium second messenger system. The sequence is that of Neurotensin receptor type 2 (NTSR2) from Homo sapiens (Human).